A 414-amino-acid polypeptide reads, in one-letter code: Serine hydroxymethyltransferase (414 aa).

(6S)-5,6,7,8-tetrahydrofolate-binding positions include Leu116 and 120–122; that span reads GHL. Lys224 carries the N6-(pyridoxal phosphate)lysine modification. (6S)-5,6,7,8-tetrahydrofolate-binding positions include Glu240 and 348–350; that span reads SPF.

The protein belongs to the SHMT family. In terms of assembly, homodimer. Pyridoxal 5'-phosphate serves as cofactor.

The protein resides in the cytoplasm. The enzyme catalyses (6R)-5,10-methylene-5,6,7,8-tetrahydrofolate + glycine + H2O = (6S)-5,6,7,8-tetrahydrofolate + L-serine. It participates in one-carbon metabolism; tetrahydrofolate interconversion. The protein operates within amino-acid biosynthesis; glycine biosynthesis; glycine from L-serine: step 1/1. In terms of biological role, catalyzes the reversible interconversion of serine and glycine with tetrahydrofolate (THF) serving as the one-carbon carrier. This reaction serves as the major source of one-carbon groups required for the biosynthesis of purines, thymidylate, methionine, and other important biomolecules. Also exhibits THF-independent aldolase activity toward beta-hydroxyamino acids, producing glycine and aldehydes, via a retro-aldol mechanism. The chain is Serine hydroxymethyltransferase from Campylobacter fetus subsp. fetus (strain 82-40).